The following is a 311-amino-acid chain: p-hydroxybenzoic acid efflux pump subunit AaeA (311 aa).

Residues 11–31 form a helical membrane-spanning segment; the sequence is VGITVLVVVLAVIAIFNVWAF.

It belongs to the membrane fusion protein (MFP) (TC 8.A.1) family.

It localises to the cell inner membrane. In terms of biological role, forms an efflux pump with AaeB. The protein is p-hydroxybenzoic acid efflux pump subunit AaeA of Yersinia pestis bv. Antiqua (strain Antiqua).